We begin with the raw amino-acid sequence, 45 residues long: Photosystem II reaction center protein K (45 aa).

Residues 1 to 8 (MEAALLLA) constitute a propeptide that is removed on maturation. Residues 24-44 (LPLIPLFFLLLAFVWQAAVGF) form a helical membrane-spanning segment.

It belongs to the PsbK family. In terms of assembly, PSII is composed of 1 copy each of membrane proteins PsbA, PsbB, PsbC, PsbD, PsbE, PsbF, PsbH, PsbI, PsbJ, PsbK, PsbL, PsbM, PsbT, PsbX, PsbY, PsbZ, Psb30/Ycf12, peripheral proteins PsbO, CyanoQ (PsbQ), PsbU, PsbV and a large number of cofactors. It forms dimeric complexes.

The protein resides in the cellular thylakoid membrane. In terms of biological role, one of the components of the core complex of photosystem II (PSII). PSII is a light-driven water:plastoquinone oxidoreductase that uses light energy to abstract electrons from H(2)O, generating O(2) and a proton gradient subsequently used for ATP formation. It consists of a core antenna complex that captures photons, and an electron transfer chain that converts photonic excitation into a charge separation. This Picosynechococcus sp. (strain ATCC 27264 / PCC 7002 / PR-6) (Agmenellum quadruplicatum) protein is Photosystem II reaction center protein K.